The primary structure comprises 356 residues: 3,4-dihydroxy-2-butanone 4-phosphate synthase (356 aa).

Residues 1–211 (MNAILSDQKT…ISDIVEYRMM (211 aa)) form a DHBP synthase region. D-ribulose 5-phosphate is bound by residues 38 to 39 (RE), D43, 150 to 154 (RIGHT), and E174. E39 is a binding site for Mg(2+). H153 provides a ligand contact to Mg(2+). Residues 212–356 (NESLIRVIAE…KSTNVNETVA (145 aa)) form a GTP cyclohydrolase II-like region.

In the N-terminal section; belongs to the DHBP synthase family. This sequence in the C-terminal section; belongs to the GTP cyclohydrolase II family. Mg(2+) is required as a cofactor. It depends on Mn(2+) as a cofactor.

The enzyme catalyses D-ribulose 5-phosphate = (2S)-2-hydroxy-3-oxobutyl phosphate + formate + H(+). The protein operates within cofactor biosynthesis; riboflavin biosynthesis; 2-hydroxy-3-oxobutyl phosphate from D-ribulose 5-phosphate: step 1/1. Its function is as follows. Catalyzes the conversion of D-ribulose 5-phosphate to formate and 3,4-dihydroxy-2-butanone 4-phosphate. The sequence is that of 3,4-dihydroxy-2-butanone 4-phosphate synthase (ribB) from Sulfurospirillum multivorans (Dehalospirillum multivorans).